We begin with the raw amino-acid sequence, 562 residues long: Dihydroxy-acid dehydratase (562 aa).

Residue C51 coordinates [2Fe-2S] cluster. D83 is a Mg(2+) binding site. C124 is a binding site for [2Fe-2S] cluster. D125 and K126 together coordinate Mg(2+). Position 126 is an N6-carboxylysine (K126). A [2Fe-2S] cluster-binding site is contributed by C196. E448 provides a ligand contact to Mg(2+). S474 serves as the catalytic Proton acceptor.

The protein belongs to the IlvD/Edd family. Homodimer. Requires [2Fe-2S] cluster as cofactor. Mg(2+) serves as cofactor.

The enzyme catalyses (2R)-2,3-dihydroxy-3-methylbutanoate = 3-methyl-2-oxobutanoate + H2O. It catalyses the reaction (2R,3R)-2,3-dihydroxy-3-methylpentanoate = (S)-3-methyl-2-oxopentanoate + H2O. The protein operates within amino-acid biosynthesis; L-isoleucine biosynthesis; L-isoleucine from 2-oxobutanoate: step 3/4. It participates in amino-acid biosynthesis; L-valine biosynthesis; L-valine from pyruvate: step 3/4. Functionally, functions in the biosynthesis of branched-chain amino acids. Catalyzes the dehydration of (2R,3R)-2,3-dihydroxy-3-methylpentanoate (2,3-dihydroxy-3-methylvalerate) into 2-oxo-3-methylpentanoate (2-oxo-3-methylvalerate) and of (2R)-2,3-dihydroxy-3-methylbutanoate (2,3-dihydroxyisovalerate) into 2-oxo-3-methylbutanoate (2-oxoisovalerate), the penultimate precursor to L-isoleucine and L-valine, respectively. This Pyrobaculum aerophilum (strain ATCC 51768 / DSM 7523 / JCM 9630 / CIP 104966 / NBRC 100827 / IM2) protein is Dihydroxy-acid dehydratase.